The chain runs to 310 residues: Olfactory receptor 2A4 (310 aa).

Topologically, residues 1–24 (MGDNITSIREFLLLGFPVGPRIQM) are extracellular. Asparagine 4 is a glycosylation site (N-linked (GlcNAc...) asparagine). Residues 25-48 (LLFGLFSLFYVFTLLGNGTILGLI) traverse the membrane as a helical segment. Over 49-56 (SLDSRLHA) the chain is Cytoplasmic. The chain crosses the membrane as a helical span at residues 57-78 (PMYFFLSHLAVVDIAYACNTVP). At 79–99 (RMLVNLLHPAKPISFAGRMMQ) the chain is on the extracellular side. A helical membrane pass occupies residues 100–119 (TFLFSTFAVTECLLLVVMSY). The Cytoplasmic segment spans residues 120–138 (DLYVAICHPLRYLAIMTWR). Residues 139-157 (VCITLAVTSWTTGVLLSLI) traverse the membrane as a helical segment. The Extracellular segment spans residues 158-194 (HLVLLLPLPFCRPQKIYHFFCEILAVLKLACADTHIN). The helical transmembrane segment at 195–218 (ENMVLAGAISGLVGPLSTIVVSYM) threads the bilayer. At 219 to 235 (CILCAILQIQSREVQRK) the chain is on the cytoplasmic side. The chain crosses the membrane as a helical span at residues 236–258 (AFRTCFSHLCVIGLVYGTAIIMY). The Extracellular portion of the chain corresponds to 259–271 (VGPRYGNPKEQKK). Residues 272-291 (YLLLFHSLFNPMLNPLICSL) traverse the membrane as a helical segment. Over 292–310 (RNSEVKNTLKRVLGVERAL) the chain is Cytoplasmic.

Belongs to the G-protein coupled receptor 1 family.

Its subcellular location is the cell membrane. Functionally, odorant receptor. The polypeptide is Olfactory receptor 2A4 (OR2A4) (Homo sapiens (Human)).